We begin with the raw amino-acid sequence, 164 residues long: Transcription elongation factor GreA (164 aa).

Belongs to the GreA/GreB family.

Its function is as follows. Necessary for efficient RNA polymerase transcription elongation past template-encoded arresting sites. The arresting sites in DNA have the property of trapping a certain fraction of elongating RNA polymerases that pass through, resulting in locked ternary complexes. Cleavage of the nascent transcript by cleavage factors such as GreA or GreB allows the resumption of elongation from the new 3'terminus. GreA releases sequences of 2 to 3 nucleotides. The protein is Transcription elongation factor GreA of Helicobacter pylori (strain Shi470).